We begin with the raw amino-acid sequence, 205 residues long: Thiamine-phosphate synthase (205 aa).

4-amino-2-methyl-5-(diphosphooxymethyl)pyrimidine is bound by residues 34–38 (QLRCK) and N66. D67 and D86 together coordinate Mg(2+). S105 contributes to the 4-amino-2-methyl-5-(diphosphooxymethyl)pyrimidine binding site. 2-[(2R,5Z)-2-carboxy-4-methylthiazol-5(2H)-ylidene]ethyl phosphate is bound at residue 131–133 (TTT). K134 is a binding site for 4-amino-2-methyl-5-(diphosphooxymethyl)pyrimidine. Residue G163 coordinates 2-[(2R,5Z)-2-carboxy-4-methylthiazol-5(2H)-ylidene]ethyl phosphate.

This sequence belongs to the thiamine-phosphate synthase family. It depends on Mg(2+) as a cofactor.

It carries out the reaction 2-[(2R,5Z)-2-carboxy-4-methylthiazol-5(2H)-ylidene]ethyl phosphate + 4-amino-2-methyl-5-(diphosphooxymethyl)pyrimidine + 2 H(+) = thiamine phosphate + CO2 + diphosphate. It catalyses the reaction 2-(2-carboxy-4-methylthiazol-5-yl)ethyl phosphate + 4-amino-2-methyl-5-(diphosphooxymethyl)pyrimidine + 2 H(+) = thiamine phosphate + CO2 + diphosphate. The catalysed reaction is 4-methyl-5-(2-phosphooxyethyl)-thiazole + 4-amino-2-methyl-5-(diphosphooxymethyl)pyrimidine + H(+) = thiamine phosphate + diphosphate. It participates in cofactor biosynthesis; thiamine diphosphate biosynthesis; thiamine phosphate from 4-amino-2-methyl-5-diphosphomethylpyrimidine and 4-methyl-5-(2-phosphoethyl)-thiazole: step 1/1. In terms of biological role, condenses 4-methyl-5-(beta-hydroxyethyl)thiazole monophosphate (THZ-P) and 2-methyl-4-amino-5-hydroxymethyl pyrimidine pyrophosphate (HMP-PP) to form thiamine monophosphate (TMP). The polypeptide is Thiamine-phosphate synthase (Neisseria gonorrhoeae (strain ATCC 700825 / FA 1090)).